A 456-amino-acid chain; its full sequence is Protein COBRA (456 aa).

Positions 1 to 36 (MESFFSRSTSIVSKLSFLALWIVFLISSSSFTSTEA) are cleaved as a signal peptide. Residues asparagine 45, asparagine 170, asparagine 178, asparagine 217, asparagine 242, asparagine 258, asparagine 328, asparagine 343, and asparagine 362 are each glycosylated (N-linked (GlcNAc...) asparagine). Asparagine 431 is lipidated: GPI-anchor amidated asparagine. The propeptide at 432–456 (GGSRSQFSFVAAVLLPLLVFFFFSA) is removed in mature form.

This sequence belongs to the COBRA family. As to expression, expressed in roots, stems, leaves, flowers and siliques. Up-regulated in the root zone of rapid longitudinal expansion.

It is found in the lateral cell membrane. In terms of biological role, involved in determining the orientation of cell expansion, probably by playing an important role in cellulose deposition. May act by recruiting cellulose synthesizing complexes to discrete positions on the cell surface. This is Protein COBRA (COB) from Arabidopsis thaliana (Mouse-ear cress).